We begin with the raw amino-acid sequence, 365 residues long: Outer capsid protein sigma-3 (365 aa).

A CCHC-type zinc finger spans residues 51-73; it reads CMHCLGVVGSLQRKLKHLPHHKC.

The protein belongs to the orthoreovirus sigma-3 protein family. Heterohexamer of three sigma-3 and three Mu-1 proteins. The RNA-binding form is probably a homodimer. Cleaved during virus the endosomal proteolytic disassembly of the outer capsid.

It is found in the virion. The protein resides in the host cytoplasm. The protein localises to the host nucleus. Stimulates translation by blocking the activation of the dsRNA-dependent protein kinase EIF2AK2/PKR, thereby inhibiting the host interferon response. Sigma3 prevents the activation of EIF2AK2 by competing with the kinase for dsRNA-binding. Its function is as follows. The viral outer shell polypeptides, of which sigma-3 is one, impose structural constraints that prevent elongation of nascent transcripts by the RNA-dependent RNA polymerase lambda-3. The sequence is that of Outer capsid protein sigma-3 (S4) from Mammalia (T2J).